Consider the following 362-residue polypeptide: Talin rod domain-containing protein 1 (362 aa).

The interval 1 to 26 is disordered; sequence MASGSAGKPTGEAASPAPASAIGGAS. Position 2 is an N-acetylalanine (Ala2). Residues 13 to 26 show a composition bias toward low complexity; the sequence is AASPAPASAIGGAS.

May homodimerize. Interacts with F-actin.

In terms of biological role, actin-binding protein which may have an oncogenic function and regulates cell proliferation, migration and invasion in cancer cells. This is Talin rod domain-containing protein 1 from Homo sapiens (Human).